The chain runs to 807 residues: 85/88 kDa calcium-independent phospholipase A2 (807 aa).

Ser-13 carries the post-translational modification Phosphoserine. ANK repeat units follow at residues 120 to 147 (WTVT…ANST), 151 to 181 (EGCT…QMDV), 185 to 215 (KGET…GLNQ), 219 to 248 (QGLT…RCNI), 251 to 281 (PGGF…QIHS), 286 to 312 (YGAS…DVDS), 316 to 345 (SGNT…NAGA), 349 to 378 (HGNT…EVDT), and 382 to 403 (FGET…KALL). The next 2 helical transmembrane spans lie at 481 to 501 (LLCL…LIAI) and 512 to 532 (LFDW…ILHS). One can recognise a PNPLA domain in the interval 482 to 666 (LCLDGGGVKG…LANNPTLDAM (185 aa)). Positions 486–491 (GGGVKG) match the GXGXXG motif. Residues 518-522 (GTSTG) carry the GXSXG motif. Ser-520 acts as the Nucleophile in catalysis. The active-site Proton acceptor is the Asp-653. The DGA/G motif lies at 653–655 (DGG). The interval 678–687 (RKGQGNKVKK) is calmodulin-binding (1-9-14 motif). The segment at 749–760 (AWCEMVGIQYFR) is calmodulin-binding (IQ motif).

In terms of assembly, homodimer formed by catalytic domains tightly interacting through a large hydrophobic interface. The contact area involves 3 alpha helices, several loops and a part of the beta sheet from each monomer. Both active sites of the dimer are in close proximity adopting an open conformation that provide sufficient space for phospholipid access and favoring cooperativity in deacylation-reacylation reactions. Each monomer has 9 ankyrin repeats stacked side-by-side in an elongated structure oriented outwards from the catalytic core. In terms of tissue distribution, expressed in pancreatic beta-cells. Expressed in skeletal muscle (at protein level).

The protein resides in the cytoplasm. It is found in the cell membrane. It localises to the mitochondrion. Its subcellular location is the cell projection. The protein localises to the pseudopodium. It carries out the reaction a 1,2-diacyl-sn-glycero-3-phosphocholine + H2O = a 1-acyl-sn-glycero-3-phosphocholine + a fatty acid + H(+). The enzyme catalyses a 1-O-alkyl-2-acyl-sn-glycero-3-phosphocholine + H2O = a 1-O-alkyl-sn-glycero-3-phosphocholine + a fatty acid + H(+). It catalyses the reaction 1,2-dihexadecanoyl-sn-glycero-3-phosphocholine + H2O = 1-hexadecanoyl-sn-glycero-3-phosphocholine + hexadecanoate + H(+). The catalysed reaction is 1-hexadecanoyl-2-(9Z-octadecenoyl)-sn-glycero-3-phosphocholine + H2O = 1-hexadecanoyl-sn-glycero-3-phosphocholine + (9Z)-octadecenoate + H(+). It carries out the reaction 1-hexadecanoyl-2-(9Z,12Z-octadecadienoyl)-sn-glycero-3-phosphocholine + H2O = (9Z,12Z)-octadecadienoate + 1-hexadecanoyl-sn-glycero-3-phosphocholine + H(+). The enzyme catalyses 1-hexadecanoyl-2-(5Z,8Z,11Z,14Z-eicosatetraenoyl)-sn-glycero-3-phosphocholine + H2O = 1-hexadecanoyl-sn-glycero-3-phosphocholine + (5Z,8Z,11Z,14Z)-eicosatetraenoate + H(+). It catalyses the reaction 1-octadecanoyl-2-(5Z,8Z,11Z,14Z-eicosatetraenoyl)-sn-glycero-3-phosphocholine + H2O = 1-octadecanoyl-sn-glycero-3-phosphocholine + (5Z,8Z,11Z,14Z)-eicosatetraenoate + H(+). The catalysed reaction is 1-hexadecanoyl-2-(5Z,8Z,11Z,14Z-eicosatetraenoyl)-sn-glycero-3-phosphoethanolamine + H2O = 1-hexadecanoyl-sn-glycero-3-phosphoethanolamine + (5Z,8Z,11Z,14Z)-eicosatetraenoate + H(+). It carries out the reaction 1,2-dihexadecanoyl-sn-glycero-3-phosphate + H2O = 1-hexadecanoyl-sn-glycero-3-phosphate + hexadecanoate + H(+). The enzyme catalyses a 1-acyl-sn-glycero-3-phosphocholine + H2O = sn-glycerol 3-phosphocholine + a fatty acid + H(+). It catalyses the reaction 1-hexadecanoyl-sn-glycero-3-phosphocholine + H2O = sn-glycerol 3-phosphocholine + hexadecanoate + H(+). The catalysed reaction is 1-(5Z,8Z,11Z,14Z-eicosatetraenoyl)-sn-glycero-3-phosphocholine + H2O = sn-glycerol 3-phosphocholine + (5Z,8Z,11Z,14Z)-eicosatetraenoate + H(+). It carries out the reaction 2-(5Z,8Z,11Z,14Z)-eicosatetraenoyl-sn-glycero-3-phosphocholine + H2O = sn-glycerol 3-phosphocholine + (5Z,8Z,11Z,14Z)-eicosatetraenoate + H(+). The enzyme catalyses 1-O-hexadecyl-2-(5Z,8Z,11Z,14Z)-eicosatetraenoyl-sn-glycero-3-phosphocholine + H2O = 1-O-hexadecyl-sn-glycero-3-phosphocholine + (5Z,8Z,11Z,14Z)-eicosatetraenoate + H(+). It catalyses the reaction 1-O-hexadecyl-2-acetyl-sn-glycero-3-phosphocholine + H2O = 1-O-hexadecyl-sn-glycero-3-phosphocholine + acetate + H(+). The catalysed reaction is hexadecanoyl-CoA + H2O = hexadecanoate + CoA + H(+). It carries out the reaction 1',3'-bis[1,2-di-(9Z-octadecenoyl)-sn-glycero-3-phospho]-glycerol + H2O = 1'-[1,2-di-(9Z-octadecenoyl)-sn-glycero-3-phospho]-3'-[1-(9Z-octadecenoyl)-sn-glycero-3-phospho]-glycerol + (9Z)-octadecenoate + H(+). The enzyme catalyses 1'-[1,2-di-(9Z-octadecenoyl)-sn-glycero-3-phospho]-3'-[1-(9Z-octadecenoyl)-sn-glycero-3-phospho]-glycerol + H2O = 1',3'-bis-[1-(9Z-octadecenoyl)-sn-glycero-3-phospho]-glycerol + (9Z)-octadecenoate + H(+). It catalyses the reaction 1',3'-bis-[1,2-di-(9Z,12Z-octadecadienoyl)-sn-glycero-3-phospho]-glycerol + H2O = 1'-[1,2-di-(9Z,12Z-octadecadienoyl)-sn-glycero-3-phospho]-3'-[1-(9Z,12Z-octadecadienoyl)-sn-glycero-3-phospho]-glycerol + (9Z,12Z)-octadecadienoate + H(+). The catalysed reaction is 1-octadecanoyl-2-(15-hydroxy-(5Z,8Z,11Z,13E)-eicosatetraenoyl)-sn-glycero-3-phosphoethanolamine + H2O = 1-octadecanoyl-sn-glycero-3-phosphoethanolamine + 15-hydroxy-(5Z,8Z,11Z,13E)-eicosatetraenoate + H(+). Activated by ATP. Inhibited by calcium-activated calmodulin. Inhibited by bromoenol lactone (BEL). Its function is as follows. Calcium-independent phospholipase involved in phospholipid remodeling with implications in cellular membrane homeostasis, mitochondrial integrity and signal transduction. Hydrolyzes the ester bond of the fatty acyl group attached at sn-1 or sn-2 position of phospholipids (phospholipase A1 and A2 activity respectively), producing lysophospholipids that are used in deacylation-reacylation cycles. Hydrolyzes both saturated and unsaturated long fatty acyl chains in various glycerophospholipid classes such as phosphatidylcholines, phosphatidylethanolamines and phosphatidates, with a preference for hydrolysis at sn-2 position. Can further hydrolyze lysophospholipids carrying saturated fatty acyl chains (lysophospholipase activity). Upon oxidative stress, contributes to remodeling of mitochondrial phospholipids in pancreatic beta cells, in a repair mechanism to reduce oxidized lipid content. Preferentially hydrolyzes oxidized polyunsaturated fatty acyl chains from cardiolipins, yielding monolysocardiolipins that can be reacylated with unoxidized fatty acyls to regenerate native cardiolipin species. Hydrolyzes oxidized glycerophosphoethanolamines present in pancreatic islets, releasing oxidized polyunsaturated fatty acids such as hydroxyeicosatetraenoates (HETEs). Has thioesterase activity toward fatty-acyl CoA releasing CoA-SH known to facilitate fatty acid transport and beta-oxidation in mitochondria particularly in skeletal muscle. Plays a role in regulation of membrane dynamics and homeostasis. Selectively hydrolyzes sn-2 arachidonoyl group in plasmalogen phospholipids, structural components of lipid rafts and myelin. Regulates F-actin polymerization at the pseudopods, which is required for both speed and directionality of MCP1/CCL2-induced monocyte chemotaxis. Targets membrane phospholipids to produce potent lipid signaling messengers. Generates lysophosphatidate (LPA, 1-acyl-glycerol-3-phosphate), which acts via G-protein receptors in various cell types. Has phospholipase A2 activity toward platelet-activating factor (PAF, 1-O-alkyl-2-acetyl-sn-glycero-3-phosphocholine), likely playing a role in inactivation of this potent pro-inflammatory signaling lipid. In response to glucose, amplifies calcium influx in pancreatic beta cells to promote INS secretion. This Rattus norvegicus (Rat) protein is 85/88 kDa calcium-independent phospholipase A2 (Pla2g6).